Here is a 271-residue protein sequence, read N- to C-terminus: NAD kinase (271 aa).

Asp64 serves as the catalytic Proton acceptor. NAD(+) is bound by residues 64 to 65 (DG), Arg69, 132 to 133 (NE), Lys143, Arg160, Asp162, 173 to 178 (TAYAMS), Ala197, and Gln231.

It belongs to the NAD kinase family. A divalent metal cation serves as cofactor.

The protein resides in the cytoplasm. It carries out the reaction NAD(+) + ATP = ADP + NADP(+) + H(+). Functionally, involved in the regulation of the intracellular balance of NAD and NADP, and is a key enzyme in the biosynthesis of NADP. Catalyzes specifically the phosphorylation on 2'-hydroxyl of the adenosine moiety of NAD to yield NADP. The polypeptide is NAD kinase (Methanocorpusculum labreanum (strain ATCC 43576 / DSM 4855 / Z)).